A 62-amino-acid chain; its full sequence is Large ribosomal subunit protein bL33c (62 aa).

Belongs to the bacterial ribosomal protein bL33 family.

It localises to the plastid. Its subcellular location is the chloroplast. The protein is Large ribosomal subunit protein bL33c of Cyanidioschyzon merolae (strain NIES-3377 / 10D) (Unicellular red alga).